The chain runs to 382 residues: S-adenosylmethionine synthase (382 aa).

Position 15 (H15) interacts with ATP. D17 is a binding site for Mg(2+). E43 contacts K(+). Residues E56 and Q99 each contribute to the L-methionine site. The tract at residues 99–109 is flexible loop; sequence QSGDIAQGVDR. Residues 164 to 166, 230 to 231, D239, 245 to 246, A262, and K266 each bind ATP; these read DAK, KF, and RK. D239 serves as a coordination point for L-methionine. Position 270 (K270) interacts with L-methionine.

The protein belongs to the AdoMet synthase family. In terms of assembly, homotetramer; dimer of dimers. Requires Mg(2+) as cofactor. It depends on K(+) as a cofactor.

It localises to the cytoplasm. The catalysed reaction is L-methionine + ATP + H2O = S-adenosyl-L-methionine + phosphate + diphosphate. It participates in amino-acid biosynthesis; S-adenosyl-L-methionine biosynthesis; S-adenosyl-L-methionine from L-methionine: step 1/1. Catalyzes the formation of S-adenosylmethionine (AdoMet) from methionine and ATP. The overall synthetic reaction is composed of two sequential steps, AdoMet formation and the subsequent tripolyphosphate hydrolysis which occurs prior to release of AdoMet from the enzyme. The chain is S-adenosylmethionine synthase from Dichelobacter nodosus (strain VCS1703A).